Here is a 127-residue protein sequence, read N- to C-terminus: Large ribosomal subunit protein bL21 (127 aa).

The segment at 102–127 is disordered; sequence TDNAKPTKGPRPKKAKAEAPAADAAE.

The protein belongs to the bacterial ribosomal protein bL21 family. In terms of assembly, part of the 50S ribosomal subunit. Contacts protein L20.

This protein binds to 23S rRNA in the presence of protein L20. The sequence is that of Large ribosomal subunit protein bL21 from Bradyrhizobium sp. (strain BTAi1 / ATCC BAA-1182).